The following is a 149-amino-acid chain: Macrodomain Ter protein (149 aa).

The protein belongs to the MatP family. As to quaternary structure, homodimer.

The protein localises to the cytoplasm. Its function is as follows. Required for spatial organization of the terminus region of the chromosome (Ter macrodomain) during the cell cycle. Prevents early segregation of duplicated Ter macrodomains during cell division. Binds specifically to matS, which is a 13 bp signature motif repeated within the Ter macrodomain. This Vibrio cholerae serotype O1 (strain ATCC 39315 / El Tor Inaba N16961) protein is Macrodomain Ter protein.